The primary structure comprises 326 residues: Phospho-N-acetylmuramoyl-pentapeptide-transferase (326 aa).

Helical transmembrane passes span 3 to 23, 51 to 71, 79 to 99, 115 to 135, 138 to 158, 169 to 189, 195 to 215, 221 to 243, and 306 to 326; these read ISIS…PAFI, TMGG…LALF, VGMI…DDFL, LALQ…GGDM, VFSY…FWLV, GIDG…GVIA, MDIL…FVFN, VFMG…MALH, and FFFW…LYLM.

The protein belongs to the glycosyltransferase 4 family. MraY subfamily. It depends on Mg(2+) as a cofactor.

The protein resides in the cell membrane. The enzyme catalyses UDP-N-acetyl-alpha-D-muramoyl-L-alanyl-gamma-D-glutamyl-L-lysyl-D-alanyl-D-alanine + di-trans,octa-cis-undecaprenyl phosphate = Mur2Ac(oyl-L-Ala-gamma-D-Glu-L-Lys-D-Ala-D-Ala)-di-trans,octa-cis-undecaprenyl diphosphate + UMP. It participates in cell wall biogenesis; peptidoglycan biosynthesis. Catalyzes the initial step of the lipid cycle reactions in the biosynthesis of the cell wall peptidoglycan: transfers peptidoglycan precursor phospho-MurNAc-pentapeptide from UDP-MurNAc-pentapeptide onto the lipid carrier undecaprenyl phosphate, yielding undecaprenyl-pyrophosphoryl-MurNAc-pentapeptide, known as lipid I. This chain is Phospho-N-acetylmuramoyl-pentapeptide-transferase, found in Streptococcus pneumoniae (strain ATCC 700669 / Spain 23F-1).